A 385-amino-acid polypeptide reads, in one-letter code: Flap endonuclease 1 (385 aa).

Residues 1–104 (MGILGLSKLI…GELAKRAERR (104 aa)) form an N-domain region. A Mg(2+)-binding site is contributed by D34. R47 and R70 together coordinate DNA. The Mg(2+) site is built by D86, E158, E160, D179, and D181. Residues 122 to 253 (GIEKFNRRLV…KRAIELINTY (132 aa)) are I-domain. A DNA-binding site is contributed by E158. Residues G231 and D233 each contribute to the DNA site. D233 provides a ligand contact to Mg(2+). An interaction with PCNA region spans residues 336-344 (TQVRLDSFF). Positions 346–385 (TLPSTPNATNAAKRKAEEAKKSANNKKAKTSGGGRGRRPK) are disordered. Residues 368 to 385 (ANNKKAKTSGGGRGRRPK) are compositionally biased toward basic residues.

Belongs to the XPG/RAD2 endonuclease family. FEN1 subfamily. In terms of assembly, interacts with PCNA. Three molecules of FEN1 bind to one PCNA trimer with each molecule binding to one PCNA monomer. PCNA stimulates the nuclease activity without altering cleavage specificity. The cofactor is Mg(2+). Phosphorylated. Phosphorylation upon DNA damage induces relocalization to the nuclear plasma.

The protein resides in the nucleus. It is found in the nucleolus. It localises to the nucleoplasm. The protein localises to the mitochondrion. Functionally, structure-specific nuclease with 5'-flap endonuclease and 5'-3' exonuclease activities involved in DNA replication and repair. During DNA replication, cleaves the 5'-overhanging flap structure that is generated by displacement synthesis when DNA polymerase encounters the 5'-end of a downstream Okazaki fragment. It enters the flap from the 5'-end and then tracks to cleave the flap base, leaving a nick for ligation. Also involved in the long patch base excision repair (LP-BER) pathway, by cleaving within the apurinic/apyrimidinic (AP) site-terminated flap. Acts as a genome stabilization factor that prevents flaps from equilibrating into structures that lead to duplications and deletions. Also possesses 5'-3' exonuclease activity on nicked or gapped double-stranded DNA, and exhibits RNase H activity. Also involved in replication and repair of rDNA and in repairing mitochondrial DNA. This is Flap endonuclease 1 from Drosophila simulans (Fruit fly).